The following is an 803-amino-acid chain: Palmitoyl thioesterase CPT1C (803 aa).

At 1–52 (MAEAHQAVGFRPSLTSDGAEVELSAPVLQEIYLSGLRSWKRHLSRFWNDFLT) the chain is on the cytoplasmic side. Residues 53–75 (GVFPASPLSWLFLFSAIQLAWFL) form a helical membrane-spanning segment. The Lumenal segment spans residues 76–103 (QLDPSLGLMEKIKELLPDWGGQHHGLRG). The helical transmembrane segment at 104 to 126 (VLAAALFASCLWGALIFTLHVAL) threads the bilayer. The Cytoplasmic segment spans residues 127-803 (RLLLSYHGWL…SKASMTSTDF (677 aa)). H470 (proton acceptor) is an active-site residue. 552-564 (GKSFIRRCHLSSD) serves as a coordination point for CoA. (R)-carnitine-binding residues include Y586, S588, and T599. The tract at residues 761–803 (LFQAGQHFKRRFRGSGKENSRHRCGFLSRQTGASKASMTSTDF) is required for interaction with GRIA1. Residues 772-803 (FRGSGKENSRHRCGFLSRQTGASKASMTSTDF) form a disordered region. Over residues 788–803 (SRQTGASKASMTSTDF) the composition is skewed to polar residues.

Belongs to the carnitine/choline acetyltransferase family. As to quaternary structure, peripherally associated with AMPAR complex. AMPAR complex consists of an inner core made of 4 pore-forming GluA/GRIA proteins (GRIA1, GRIA2, GRIA3 and GRIA4) and 4 major auxiliary subunits arranged in a twofold symmetry. One of the two pairs of distinct binding sites is occupied either by CNIH2, CNIH3 or CACNG2, CACNG3. The other harbors CACNG2, CACNG3, CACNG4, CACNG8 or GSG1L. This inner core of AMPAR complex is complemented by outer core constituents binding directly to the GluA/GRIA proteins at sites distinct from the interaction sites of the inner core constituents. Outer core constituents include at least PRRT1, PRRT2, CKAMP44/SHISA9, FRRS1L and NRN1. The proteins of the inner and outer core serve as a platform for other, more peripherally associated AMPAR constituents, including CPT1C. Alone or in combination, these auxiliary subunits control the gating and pharmacology of the AMPAR complex and profoundly impact their biogenesis and protein processing. Interacts with SACM1L; the interaction regulates SACM1L phosphatidylinositol-3-phosphatase activity and translocation to endoplasmic reticulum/trans Golgi network in a malonyl-CoA dependent manner. Interacts with ATL1. Expressed predominantly in brain and testis. Expressed in motor neurons.

Its subcellular location is the cell projection. The protein resides in the dendrite. The protein localises to the axon. It is found in the endoplasmic reticulum membrane. The catalysed reaction is S-hexadecanoyl-L-cysteinyl-[protein] + H2O = L-cysteinyl-[protein] + hexadecanoate + H(+). Palmitoyl thioesterase specifically expressed in the endoplasmic reticulum of neurons. Modulates the trafficking of the glutamate receptor, AMPAR, to plasma membrane through depalmitoylation of GRIA1. Also regulates AMPR trafficking through the regulation of SACM1L phosphatidylinositol-3-phosphatase activity by interaction in a malonyl-CoA dependent manner. Binds malonyl-CoA and couples malonyl-CoA to ceramide levels, necessary for proper spine maturation and contributing to systemic energy homeostasis and appetite control. Binds to palmitoyl-CoA, but does not have carnitine palmitoyltransferase 1 catalytic activity or at very low levels. The protein is Palmitoyl thioesterase CPT1C of Homo sapiens (Human).